A 273-amino-acid polypeptide reads, in one-letter code: Pantothenate synthetase (273 aa).

27-34 (MGALHEGH) serves as a coordination point for ATP. The Proton donor role is filled by His-34. A (R)-pantoate-binding site is contributed by Gln-58. Position 58 (Gln-58) interacts with beta-alanine. 144–147 (GKKD) lines the ATP pocket. Residue Gln-150 coordinates (R)-pantoate. Residues Val-173 and 181–184 (LSSR) contribute to the ATP site.

This sequence belongs to the pantothenate synthetase family. As to quaternary structure, homodimer.

Its subcellular location is the cytoplasm. The enzyme catalyses (R)-pantoate + beta-alanine + ATP = (R)-pantothenate + AMP + diphosphate + H(+). It functions in the pathway cofactor biosynthesis; (R)-pantothenate biosynthesis; (R)-pantothenate from (R)-pantoate and beta-alanine: step 1/1. Catalyzes the condensation of pantoate with beta-alanine in an ATP-dependent reaction via a pantoyl-adenylate intermediate. This chain is Pantothenate synthetase, found in Sulfurimonas denitrificans (strain ATCC 33889 / DSM 1251) (Thiomicrospira denitrificans (strain ATCC 33889 / DSM 1251)).